The chain runs to 40 residues: Protein YneP (40 aa).

This Escherichia coli (strain K12) protein is Protein YneP.